A 126-amino-acid polypeptide reads, in one-letter code: NADP-reducing hydrogenase subunit HndB (126 aa).

Heterotetramer composed of HndA, HndB, HndC and HndD subunits. HndA and HndB could form a heterodimeric intermediate in the electron transfer between the active site of hydrogenase subunit HndD and the NADP reduction site of the reducing subunit HndC.

It catalyses the reaction H2 + NADP(+) = NADPH + H(+). Inhibited by oxygen. In terms of biological role, catalyzes the reduction of NADP in the presence of molecular H2 to yield NADPH. This Solidesulfovibrio fructosivorans (Desulfovibrio fructosivorans) protein is NADP-reducing hydrogenase subunit HndB (hndB).